The sequence spans 216 residues: Phosphatidylserine decarboxylase proenzyme (216 aa).

Residue S183 is the Schiff-base intermediate with substrate; via pyruvic acid of the active site. S183 carries the pyruvic acid (Ser); by autocatalysis modification.

Belongs to the phosphatidylserine decarboxylase family. PSD-A subfamily. As to quaternary structure, heterodimer of a large membrane-associated beta subunit and a small pyruvoyl-containing alpha subunit. It depends on pyruvate as a cofactor. In terms of processing, is synthesized initially as an inactive proenzyme. Formation of the active enzyme involves a self-maturation process in which the active site pyruvoyl group is generated from an internal serine residue via an autocatalytic post-translational modification. Two non-identical subunits are generated from the proenzyme in this reaction, and the pyruvate is formed at the N-terminus of the alpha chain, which is derived from the carboxyl end of the proenzyme. The post-translation cleavage follows an unusual pathway, termed non-hydrolytic serinolysis, in which the side chain hydroxyl group of the serine supplies its oxygen atom to form the C-terminus of the beta chain, while the remainder of the serine residue undergoes an oxidative deamination to produce ammonia and the pyruvoyl prosthetic group on the alpha chain.

The protein resides in the cell membrane. The enzyme catalyses a 1,2-diacyl-sn-glycero-3-phospho-L-serine + H(+) = a 1,2-diacyl-sn-glycero-3-phosphoethanolamine + CO2. It participates in phospholipid metabolism; phosphatidylethanolamine biosynthesis; phosphatidylethanolamine from CDP-diacylglycerol: step 2/2. Its function is as follows. Catalyzes the formation of phosphatidylethanolamine (PtdEtn) from phosphatidylserine (PtdSer). The sequence is that of Phosphatidylserine decarboxylase proenzyme from Cupriavidus taiwanensis (strain DSM 17343 / BCRC 17206 / CCUG 44338 / CIP 107171 / LMG 19424 / R1) (Ralstonia taiwanensis (strain LMG 19424)).